Reading from the N-terminus, the 365-residue chain is MPELPEVETIACGLRPALSGRRIVGVTVHNPGTLEGPLCTPAAFTEAVQGQRIADVGRRGKLLLVAFASLPPVGHAGQPRPEGLSSSTVRDFLVTHGFHAAGCATSVHACAPLLADGQQTRGRLAGHGDGMDGTSRTGSTLPGTGGTENSDAVAVADDDTVLGLAFHLKMTGRLFIHPPATPAGIHTRVVFDLEGGTRLFFDDARKFGYVRCITRRSLALWPFWRDLGPEPLETEARGFAARLARRRGRIKALLLDQKVVAGVGNIYADESLFRAGIRPDTQAHTLTPERLFALHGHLQDVLRESIAECGSSIRDYRDAHGDAGAFQNSFRVYGRGGQPCRHCGTTLATAQVAGRTTVFCPQCQR.

Pro-2 (schiff-base intermediate with DNA) is an active-site residue. The active-site Proton donor is Glu-3. Lys-61 acts as the Proton donor; for beta-elimination activity in catalysis. The tract at residues Arg-121–Ser-150 is disordered. Residues Thr-134–Ser-150 show a composition bias toward polar residues. Positions 186, 205, and 246 each coordinate DNA. The FPG-type zinc-finger motif lies at Arg-331–Arg-365. The active-site Proton donor; for delta-elimination activity is Arg-355.

It belongs to the FPG family. Monomer. Requires Zn(2+) as cofactor.

It catalyses the reaction Hydrolysis of DNA containing ring-opened 7-methylguanine residues, releasing 2,6-diamino-4-hydroxy-5-(N-methyl)formamidopyrimidine.. The enzyme catalyses 2'-deoxyribonucleotide-(2'-deoxyribose 5'-phosphate)-2'-deoxyribonucleotide-DNA = a 3'-end 2'-deoxyribonucleotide-(2,3-dehydro-2,3-deoxyribose 5'-phosphate)-DNA + a 5'-end 5'-phospho-2'-deoxyribonucleoside-DNA + H(+). In terms of biological role, involved in base excision repair of DNA damaged by oxidation or by mutagenic agents. Acts as a DNA glycosylase that recognizes and removes damaged bases. Has a preference for oxidized purines, such as 7,8-dihydro-8-oxoguanine (8-oxoG). Has AP (apurinic/apyrimidinic) lyase activity and introduces nicks in the DNA strand. Cleaves the DNA backbone by beta-delta elimination to generate a single-strand break at the site of the removed base with both 3'- and 5'-phosphates. The protein is Formamidopyrimidine-DNA glycosylase of Nitratidesulfovibrio vulgaris (strain ATCC 29579 / DSM 644 / CCUG 34227 / NCIMB 8303 / VKM B-1760 / Hildenborough) (Desulfovibrio vulgaris).